The primary structure comprises 446 residues: Glutamate--tRNA ligase 2 (446 aa).

The 'HIGH' region motif lies at 8-18; sequence PSPTGYLHIGN. The 'KMSKS' region motif lies at 239–243; the sequence is GLSKR. Residue lysine 242 participates in ATP binding.

This sequence belongs to the class-I aminoacyl-tRNA synthetase family. Glutamate--tRNA ligase type 1 subfamily. In terms of assembly, monomer.

It is found in the cytoplasm. It carries out the reaction tRNA(Glu) + L-glutamate + ATP = L-glutamyl-tRNA(Glu) + AMP + diphosphate. Catalyzes the attachment of glutamate to tRNA(Glu) in a two-step reaction: glutamate is first activated by ATP to form Glu-AMP and then transferred to the acceptor end of tRNA(Glu). The protein is Glutamate--tRNA ligase 2 of Methylobacterium radiotolerans (strain ATCC 27329 / DSM 1819 / JCM 2831 / NBRC 15690 / NCIMB 10815 / 0-1).